The primary structure comprises 140 residues: Holo-[acyl-carrier-protein] synthase (140 aa).

2 residues coordinate Mg(2+): aspartate 8 and glutamate 62.

It belongs to the P-Pant transferase superfamily. AcpS family. Requires Mg(2+) as cofactor.

The protein resides in the cytoplasm. It catalyses the reaction apo-[ACP] + CoA = holo-[ACP] + adenosine 3',5'-bisphosphate + H(+). In terms of biological role, transfers the 4'-phosphopantetheine moiety from coenzyme A to a Ser of acyl-carrier-protein. This Cupriavidus necator (strain ATCC 17699 / DSM 428 / KCTC 22496 / NCIMB 10442 / H16 / Stanier 337) (Ralstonia eutropha) protein is Holo-[acyl-carrier-protein] synthase.